Consider the following 427-residue polypeptide: Glutamate-1-semialdehyde 2,1-aminomutase (427 aa).

Residue Lys-265 is modified to N6-(pyridoxal phosphate)lysine.

The protein belongs to the class-III pyridoxal-phosphate-dependent aminotransferase family. HemL subfamily. Homodimer. Pyridoxal 5'-phosphate is required as a cofactor.

It is found in the cytoplasm. It carries out the reaction (S)-4-amino-5-oxopentanoate = 5-aminolevulinate. The protein operates within porphyrin-containing compound metabolism; protoporphyrin-IX biosynthesis; 5-aminolevulinate from L-glutamyl-tRNA(Glu): step 2/2. The sequence is that of Glutamate-1-semialdehyde 2,1-aminomutase from Burkholderia lata (strain ATCC 17760 / DSM 23089 / LMG 22485 / NCIMB 9086 / R18194 / 383).